The following is a 160-amino-acid chain: Nitrate reductase [NADH] (160 aa).

An FAD-binding site is contributed by T37.

This sequence belongs to the nitrate reductase family. In terms of assembly, homodimer. The cofactor is FAD. Heme is required as a cofactor. Requires Mo-molybdopterin as cofactor.

It carries out the reaction nitrite + NAD(+) + H2O = nitrate + NADH + H(+). In terms of biological role, nitrate reductase is a key enzyme involved in the first step of nitrate assimilation in plants, fungi and bacteria. In Lotus tetragonolobus (Winged pea), this protein is Nitrate reductase [NADH] (NIA).